The chain runs to 415 residues: Serine/threonine transporter SstT (415 aa).

8 helical membrane-spanning segments follow: residues 23 to 43 (ILIG…AAIA), 47 to 67 (LGTL…LMLV), 85 to 105 (ILFL…LFSF), 144 to 164 (ALLN…GFAL), 181 to 201 (AVTF…FGLV), 220 to 240 (LLVL…LLVF), 293 to 313 (IPLG…VLTL), and 333 to 353 (VVAS…LLLI).

Belongs to the dicarboxylate/amino acid:cation symporter (DAACS) (TC 2.A.23) family.

It is found in the cell inner membrane. The enzyme catalyses L-serine(in) + Na(+)(in) = L-serine(out) + Na(+)(out). The catalysed reaction is L-threonine(in) + Na(+)(in) = L-threonine(out) + Na(+)(out). Involved in the import of serine and threonine into the cell, with the concomitant import of sodium (symport system). This chain is Serine/threonine transporter SstT, found in Klebsiella pneumoniae (strain 342).